We begin with the raw amino-acid sequence, 73 residues long: Homeodomain-only protein (73 aa).

Residues Ala3–Glu62 constitute a DNA-binding region (homeobox; degenerate).

In terms of assembly, interacts with serum response factor (SRF). Component of a large complex containing histone deacetylases such as HDAC2. Interacts with the acetylated forms of HSPA1A and HSPA1B. Interacts with HSPA8. In terms of tissue distribution, expressed in the embryonic and adult heart and in the adult brain, liver, lung, skeletal muscle, intestine and spleen. Throughout embryonic and postnatal development, it is expressed in the myocardium.

The protein resides in the nucleus. The protein localises to the cytoplasm. In terms of biological role, atypical homeodomain protein which does not bind DNA and is required to modulate cardiac growth and development. Acts via its interaction with SRF, thereby modulating the expression of SRF-dependent cardiac-specific genes and cardiac development. Prevents SRF-dependent transcription either by inhibiting SRF binding to DNA or by recruiting histone deacetylase (HDAC) proteins that prevent transcription by SRF. Overexpression causes cardiac hypertrophy. Acts as a co-chaperone for HSPA1A and HSPA1B chaperone proteins and assists in chaperone-mediated protein refolding. The chain is Homeodomain-only protein (Hopx) from Mus musculus (Mouse).